A 180-amino-acid chain; its full sequence is Chromosome-anchoring protein RacA (180 aa).

A DNA-binding region (H-T-H motif) is located at residues 5–25 (TPFIAKKLGVSPKAVVRIAQQ). Residues 90-150 (HDFEQLAAQL…KLEAGLKKEE (61 aa)) are a coiled coil.

This sequence belongs to the RacA family.

The protein localises to the cytoplasm. Its function is as follows. Required for the formation of axial filaments and for anchoring the origin regions at the cell poles in sporulating cells, thus ensuring proper chromosome segregation in the prespore. Binds in a dispersed manner throughout the chromosome but preferentially to sites clustered in the origin portion of the chromosome, causing condensation of the chromosome and its remodeling into an elongated, anchored structure. This chain is Chromosome-anchoring protein RacA, found in Bacillus anthracis (strain A0248).